Consider the following 158-residue polypeptide: Protein Smg homolog (158 aa).

It belongs to the Smg family.

This is Protein Smg homolog from Thioalkalivibrio sulfidiphilus (strain HL-EbGR7).